We begin with the raw amino-acid sequence, 299 residues long: GTPase Era (299 aa).

The 168-residue stretch at 4–171 (KSGFVAILGR…IKLLTDNLEE (168 aa)) folds into the Era-type G domain. Residues 12–19 (GRPNVGKS) form a G1 region. Residue 12-19 (GRPNVGKS) participates in GTP binding. Residues 38–42 (QTTRN) form a G2 region. The interval 59–62 (DTPG) is G3. GTP-binding positions include 59–63 (DTPGI) and 121–124 (NKID). Residues 121–124 (NKID) form a G4 region. The G5 stretch occupies residues 150–152 (ISA). One can recognise a KH type-2 domain in the interval 202–280 (TQQEVPHSVA…YLETWVKVKK (79 aa)).

It belongs to the TRAFAC class TrmE-Era-EngA-EngB-Septin-like GTPase superfamily. Era GTPase family. In terms of assembly, monomer.

The protein resides in the cytoplasm. It is found in the cell membrane. In terms of biological role, an essential GTPase that binds both GDP and GTP, with rapid nucleotide exchange. Plays a role in 16S rRNA processing and 30S ribosomal subunit biogenesis and possibly also in cell cycle regulation and energy metabolism. This chain is GTPase Era, found in Streptococcus agalactiae serotype III (strain NEM316).